Consider the following 210-residue polypeptide: Chaperone protein TorD (210 aa).

Belongs to the TorD/DmsD family. TorD subfamily.

It localises to the cytoplasm. Its function is as follows. Involved in the biogenesis of TorA. Acts on TorA before the insertion of the molybdenum cofactor and, as a result, probably favors a conformation of the apoenzyme that is competent for acquiring the cofactor. The polypeptide is Chaperone protein TorD (Salmonella arizonae (strain ATCC BAA-731 / CDC346-86 / RSK2980)).